The chain runs to 418 residues: MSYQKQQKPTLTGQRFKTRKRDEKERFDPSQFQESIVQGLNQTGTDLEAVAKFLDSSGAKLDYRRYAETLFDILVAGGMLAPGGALSDDMTRTKYCVFTAQEDIKTMKAYAQVFNKLIRRYKYLEKGFEEEIKKLLLFLKGFSESERNKLAMLTGVLLGNGSLSAAILSSLFNDNLVKEGVSPAFAVKLFKSWISEKDINSVAGSLRKVSMDNRLMELFPVNKRSYEHFSRYFTGAGLKEISDFARNQQSLGARKELQKELQEQISLGVSFKEIIDYCKEEMKRSSISEQLMIGIMWTSLMSDMEWNKKEELVTEQAIKHLKQHSPLLKAFSTQAQSELSLLQRIQEFCYDNIHFMKTFQKMVLLLYKVDVLSEEAVLKWFTEAHLAKGKSVFLEQMKTFVEWLKNAEEESESEEESD.

Over residues 1–15 the composition is skewed to polar residues; the sequence is MSYQKQQKPTLTGQR. The disordered stretch occupies residues 1 to 29; that stretch reads MSYQKQQKPTLTGQRFKTRKRDEKERFDP. The 168-residue stretch at 247–414 folds into the W2 domain; the sequence is NQQSLGARKE…KNAEEESESE (168 aa).

It belongs to the BZW family.

In terms of biological role, translation initiation regulator which may repress repeat-associated non-AUG (RAN) initiated translation probably by acting as a competitive inhibitor of eukaryotic translation initiation factor 5 (EIF5) function. Enhances histone H4 gene transcription but does not seem to bind DNA directly. This Danio rerio (Zebrafish) protein is eIF5-mimic protein 2-B (bzw1b).